Reading from the N-terminus, the 286-residue chain is Main hemagglutinin component type C (286 aa).

The 1-alpha repeat unit spans residues 2-55; that stretch reads SQTNANDLRNNEVFFISPSNNTNKVLDKISQSEVKLWNKLSGANQKWRLIYDTN. Ricin B-type lectin domains are found at residues 12–140 and 180–284; these read NEVF…FKFS and DSSR…WIIN. The 1-beta repeat unit spans residues 56–100; that stretch reads KQAYKIKVMDNTSLILTWNAPLSSVSVKTDTNGDNQYWYLLQNYI. The 1-gamma repeat unit spans residues 101–148; it reads SRNVIIRNYMNPNLVLQYNIDDTLMVSTQTSSSNQFFKFSNCIYEALN. The 2-alpha repeat unit spans residues 149-193; that stretch reads NRNCKLQTQLNSDRFLSKNLNSQIIVLWQWFDSSRQKWIIEYNET. Residues 167 to 183 form a sugar-binding site 1 region; that stretch reads NLNSQIIVLWQWFDSSR. The stretch at 194–239 is one 2-beta repeat; that stretch reads KSAYTLKCQENNRYLTWIQNSNNYVETYQSTDSLIQYWNINYLDND. The 2-gamma repeat unit spans residues 240–286; the sequence is ASKYILYNLQDTNRVLDVYNSQIANGTHVIVDSYHGNTNQQWIINLI. The segment at 256 to 279 is sugar-binding site 2; that stretch reads DVYNSQIANGTHVIVDSYHGNTNQ.

As to quaternary structure, botulinum toxins are produced as progenitor toxins of large molecular sizes of 12S (M toxin) and 16S (L toxin). M toxin consists of a non-toxic, non-hemagglutinin component (NTNHA) and the neurotoxin. L toxin consists of the M toxin and the 3 subcomponents of hemagglutinin (HA). HA is composed of subcomponents of 70, 33, and 17 kDa. The 70 kDa subcomponent undergoes proteolytic processing and is split into HA-55 (also called HA-53 and HA3b) and HA-22-23 (also called HA3a). The stoichiometry of the whole complex has been modeled as one BoNT/C, one NTNHA, three HA-70, six HA-33 and three HA-17.

It localises to the secreted. Functionally, agglutinates human erythrocytes. The hemagglutinin (HA) component of the progenitor toxin protects the structural integrity of botulinum neurotoxin; may increase internalization of the neurotoxin into the bloodstream of the host. The hemagglutinin (HA) component is involved in binding to the upper small intestine through interactions with glycolipids and glycoproteins containing sialic acid moieties. Binds galactose or oligosaccharides with galactose at their non-reducing end. Binds eukaryotic host mucins; binding is inhibited by N-acetyl-beta-neuraminic acid, N-acetyl-D-galactosamine, galactose, and methyl N-acetyl-beta-neuraminic acid. Binds N-acetyl-beta-neuraminic acid, N-acetyl-D-galactosamine and galactose (but not glucose) via 2 sites. The sequence is that of Main hemagglutinin component type C from Clostridium botulinum C (Clostridium botulinum C bacteriophage).